A 215-amino-acid polypeptide reads, in one-letter code: Pyrrolidone-carboxylate peptidase (215 aa).

Residues Glu78, Cys141, and His165 contribute to the active site.

The protein belongs to the peptidase C15 family. In terms of assembly, homotetramer.

Its subcellular location is the cytoplasm. The catalysed reaction is Release of an N-terminal pyroglutamyl group from a polypeptide, the second amino acid generally not being Pro.. Functionally, removes 5-oxoproline from various penultimate amino acid residues except L-proline. The polypeptide is Pyrrolidone-carboxylate peptidase (pcp) (Streptococcus pyogenes serotype M1).